We begin with the raw amino-acid sequence, 235 residues long: Putative N-acetylmannosamine-6-phosphate 2-epimerase (235 aa).

This sequence belongs to the NanE family.

It carries out the reaction an N-acyl-D-glucosamine 6-phosphate = an N-acyl-D-mannosamine 6-phosphate. It functions in the pathway amino-sugar metabolism; N-acetylneuraminate degradation; D-fructose 6-phosphate from N-acetylneuraminate: step 3/5. Its function is as follows. Converts N-acetylmannosamine-6-phosphate (ManNAc-6-P) to N-acetylglucosamine-6-phosphate (GlcNAc-6-P). In Enterobacter sp. (strain 638), this protein is Putative N-acetylmannosamine-6-phosphate 2-epimerase.